The following is a 366-amino-acid chain: 3-dehydroquinate synthase (366 aa).

Residues 75–80, 109–113, 133–134, Lys146, Lys155, and 173–176 each bind NAD(+); these read DGEQYK, GVIGD, TT, and CLST. Zn(2+)-binding residues include Glu188, His251, and His268.

Belongs to the sugar phosphate cyclases superfamily. Dehydroquinate synthase family. It depends on NAD(+) as a cofactor. Requires Co(2+) as cofactor. Zn(2+) serves as cofactor.

Its subcellular location is the cytoplasm. It catalyses the reaction 7-phospho-2-dehydro-3-deoxy-D-arabino-heptonate = 3-dehydroquinate + phosphate. The protein operates within metabolic intermediate biosynthesis; chorismate biosynthesis; chorismate from D-erythrose 4-phosphate and phosphoenolpyruvate: step 2/7. Catalyzes the conversion of 3-deoxy-D-arabino-heptulosonate 7-phosphate (DAHP) to dehydroquinate (DHQ). In Vibrio parahaemolyticus serotype O3:K6 (strain RIMD 2210633), this protein is 3-dehydroquinate synthase.